The sequence spans 487 residues: UDP-glycosyltransferase 72E1 (487 aa).

Catalysis depends on H18, which acts as the Proton acceptor. H18 lines the an anthocyanidin pocket. D116 functions as the Charge relay in the catalytic mechanism. A351, Q353, H368, W371, N372, S373, and E376 together coordinate UDP-alpha-D-glucose. Residue A391 coordinates an anthocyanidin. E392 and Q393 together coordinate UDP-alpha-D-glucose.

The protein belongs to the UDP-glycosyltransferase family. In terms of assembly, interacts with SIS8. In terms of tissue distribution, expressed in seedlings, roots and leaves.

Its subcellular location is the nucleus. The catalysed reaction is (E)-coniferaldehyde + UDP-alpha-D-glucose = 4-O-(beta-D-glucosyl)-4-(E)-coniferyl aldehyde + UDP + H(+). It carries out the reaction (E)-sinapaldehyde + UDP-alpha-D-glucose = 4-O-(beta-D-glucosyl)-4-trans-sinapoyl aldehyde + UDP + H(+). Functionally, UDP-glycosyltransferase that glucosylates coniferyl aldehyde to form coniferyl aldehyde 4-O-glucoside. Glucosylates sinapyl aldehyde to form sinapyl aldehyde 4-O-glucoside. Is not active in presence of coniferyl alcohol or sinapyl alcohol. Can glucosylate the phytotoxic xenobiotic compound 2,4,5-trichlorophenol (TCP). This chain is UDP-glycosyltransferase 72E1, found in Arabidopsis thaliana (Mouse-ear cress).